The chain runs to 210 residues: Na(+)-translocating NADH-quinone reductase subunit D (210 aa).

The next 5 membrane-spanning stretches (helical) occupy residues F42–I62, I72–A92, V103–M123, L131–F151, and N178–I198.

Belongs to the NqrDE/RnfAE family. Composed of six subunits; NqrA, NqrB, NqrC, NqrD, NqrE and NqrF.

Its subcellular location is the cell inner membrane. It catalyses the reaction a ubiquinone + n Na(+)(in) + NADH + H(+) = a ubiquinol + n Na(+)(out) + NAD(+). NQR complex catalyzes the reduction of ubiquinone-1 to ubiquinol by two successive reactions, coupled with the transport of Na(+) ions from the cytoplasm to the periplasm. NqrA to NqrE are probably involved in the second step, the conversion of ubisemiquinone to ubiquinol. The sequence is that of Na(+)-translocating NADH-quinone reductase subunit D from Vibrio vulnificus (strain YJ016).